A 380-amino-acid polypeptide reads, in one-letter code: Cytochrome b (380 aa).

Transmembrane regions (helical) follow at residues 34 to 54 (FGSL…LLAM), 78 to 99 (WLIR…YLHI), 114 to 134 (WNTG…GYVL), and 179 to 199 (FFAL…IHLT). Heme b is bound by residues His-84 and His-98. 2 residues coordinate heme b: His-183 and His-197. His-202 serves as a coordination point for a ubiquinone. Transmembrane regions (helical) follow at residues 227–247 (LKDF…ALFT), 289–309 (LGGV…PFLH), 321–341 (LSQT…WIGS), and 348–368 (FITI…ILFP).

It belongs to the cytochrome b family. As to quaternary structure, the cytochrome bc1 complex contains 11 subunits: 3 respiratory subunits (MT-CYB, CYC1 and UQCRFS1), 2 core proteins (UQCRC1 and UQCRC2) and 6 low-molecular weight proteins (UQCRH/QCR6, UQCRB/QCR7, UQCRQ/QCR8, UQCR10/QCR9, UQCR11/QCR10 and a cleavage product of UQCRFS1). This cytochrome bc1 complex then forms a dimer. Heme b serves as cofactor.

It localises to the mitochondrion inner membrane. Its function is as follows. Component of the ubiquinol-cytochrome c reductase complex (complex III or cytochrome b-c1 complex) that is part of the mitochondrial respiratory chain. The b-c1 complex mediates electron transfer from ubiquinol to cytochrome c. Contributes to the generation of a proton gradient across the mitochondrial membrane that is then used for ATP synthesis. The sequence is that of Cytochrome b (MT-CYB) from Coracias caudatus (Lilac-breasted roller).